We begin with the raw amino-acid sequence, 217 residues long: Probable lipoprotein CPn_0875/CP_0994/CPj0875/CpB0904 (217 aa).

The N-terminal stretch at 1–21 is a signal peptide; the sequence is MKRVIYKTIFCGLTLLTSLSS. A lipid anchor (N-palmitoyl cysteine) is attached at C22. The S-diacylglycerol cysteine moiety is linked to residue C22.

The protein belongs to the chlamydial CPn_0875/CT_734/TC_0107 family.

It is found in the cell membrane. The chain is Probable lipoprotein CPn_0875/CP_0994/CPj0875/CpB0904 from Chlamydia pneumoniae (Chlamydophila pneumoniae).